Reading from the N-terminus, the 432-residue chain is Adenylosuccinate synthetase (432 aa).

GTP contacts are provided by residues 12 to 18 (GDEGKGK) and 40 to 42 (GHT). Asp-13 functions as the Proton acceptor in the catalytic mechanism. Mg(2+) is bound by residues Asp-13 and Gly-40. IMP contacts are provided by residues 13 to 16 (DEGK), 38 to 41 (NAGH), Thr-129, Arg-143, Gln-224, Thr-239, and Arg-303. The Proton donor role is filled by His-41. A substrate-binding site is contributed by 299 to 305 (VTTGRRR). GTP-binding positions include Arg-305, 331 to 333 (KLD), and 413 to 415 (GVG).

The protein belongs to the adenylosuccinate synthetase family. In terms of assembly, homodimer. Requires Mg(2+) as cofactor.

Its subcellular location is the cytoplasm. The enzyme catalyses IMP + L-aspartate + GTP = N(6)-(1,2-dicarboxyethyl)-AMP + GDP + phosphate + 2 H(+). Its pathway is purine metabolism; AMP biosynthesis via de novo pathway; AMP from IMP: step 1/2. Plays an important role in the de novo pathway of purine nucleotide biosynthesis. Catalyzes the first committed step in the biosynthesis of AMP from IMP. This chain is Adenylosuccinate synthetase, found in Mycobacterium tuberculosis (strain CDC 1551 / Oshkosh).